The chain runs to 402 residues: Multidrug resistance protein MdtH (402 aa).

At 1-12 (MSRVSQARNLGK) the chain is on the cytoplasmic side. A helical membrane pass occupies residues 13 to 33 (YFLLIDNMLVVLGFFVVFPLI). Residues 34-98 (SIRFVDQMGW…GFATMGIAHE (65 aa)) are Periplasmic-facing. Residues 99-116 (PWLLWFSCLLSGLGGTLF) traverse the membrane as a helical segment. The Cytoplasmic portion of the chain corresponds to 117–138 (DPPRSALVVKLIRPQQRGRFFS). The helical transmembrane segment at 139–159 (LLMMQDSAGAVIGALLGSWLL) threads the bilayer. Over 160-164 (QYDFR) the chain is Periplasmic. Residues 165–185 (LVCATGAVLFVLCAAFNAWLL) form a helical membrane-spanning segment. Residues 186–213 (PAWKLSTVRTPVREGMTRVMRDKRFVTY) lie on the Cytoplasmic side of the membrane. The chain crosses the membrane as a helical span at residues 214 to 234 (VLTLAGYYMLAVQVMLMLPIM). The Periplasmic segment spans residues 235 to 243 (VNDVAGAPS). Residues 244 to 264 (AVKWMYAIEACLSLTLLYPIA) traverse the membrane as a helical segment. The Cytoplasmic portion of the chain corresponds to 265–276 (RWSEKHFRLEHR). Residues 277–297 (LMAGLLIMSLSMMPVGMVSGL) form a helical membrane-spanning segment. Residues 298 to 299 (QQ) lie on the Periplasmic side of the membrane. The chain crosses the membrane as a helical span at residues 300 to 320 (LFTLICLFYIGSIIAEPARET). Residues 321 to 339 (LSASLADARARGSYMGFSR) lie on the Cytoplasmic side of the membrane. The helical transmembrane segment at 340–360 (LGLAIGGAIGYIGGGWLFDLG) threads the bilayer. Residues 361-367 (KSAHQPE) lie on the Periplasmic side of the membrane. The chain crosses the membrane as a helical span at residues 368–388 (LPWMMLGIIGIFTFLALGWQF). Topologically, residues 389-402 (SQKRAARRLLERDA) are cytoplasmic.

This sequence belongs to the major facilitator superfamily. DHA1 family. MdtH (TC 2.A.1.2.21) subfamily.

It localises to the cell inner membrane. In terms of biological role, confers resistance to norfloxacin and enoxacin. This Escherichia coli O139:H28 (strain E24377A / ETEC) protein is Multidrug resistance protein MdtH.